We begin with the raw amino-acid sequence, 599 residues long: Elongation factor 4 (599 aa).

Residues 2–184 enclose the tr-type G domain; the sequence is KNIRNFSIIA…RLVRDIPPPQ (183 aa). GTP-binding positions include 14-19 and 131-134; these read DHGKST and NKID.

Belongs to the TRAFAC class translation factor GTPase superfamily. Classic translation factor GTPase family. LepA subfamily.

The protein localises to the cell inner membrane. It catalyses the reaction GTP + H2O = GDP + phosphate + H(+). Required for accurate and efficient protein synthesis under certain stress conditions. May act as a fidelity factor of the translation reaction, by catalyzing a one-codon backward translocation of tRNAs on improperly translocated ribosomes. Back-translocation proceeds from a post-translocation (POST) complex to a pre-translocation (PRE) complex, thus giving elongation factor G a second chance to translocate the tRNAs correctly. Binds to ribosomes in a GTP-dependent manner. This is Elongation factor 4 from Salmonella arizonae (strain ATCC BAA-731 / CDC346-86 / RSK2980).